The following is a 359-amino-acid chain: Palmitoyltransferase ERF2 (359 aa).

Positions 1 to 21 (MALVSRRSTRSESTSITKEEH) are disordered. At 1–75 (MALVSRRSTR…RFRTVKGAKP (75 aa)) the chain is on the cytoplasmic side. Residues 76 to 96 (LWLGVLLAIVCPMVLFSIFEA) traverse the membrane as a helical segment. At 97–104 (HKLWHTQN) the chain is on the lumenal side. Residues 105–125 (GYKVLVIFFYYFWVITLASFI) form a helical membrane-spanning segment. Topologically, residues 126–217 (RTATSDPGVL…NCIGKRNYRF (92 aa)) are cytoplasmic. A DHHC domain is found at 173-223 (KYCPSCRIWRPPRSSHCSTCNVCVMVHDHHCIWVNNCIGKRNYRFFLIFLL). Residue Cys203 is the S-palmitoyl cysteine intermediate of the active site. A helical membrane pass occupies residues 218–238 (FLIFLLGAILSSVILLTNCAI). The Lumenal segment spans residues 239–250 (HIARESGGPRDC). The chain crosses the membrane as a helical span at residues 251–271 (PVAILLLCYAGLTLWYPAILF). Topologically, residues 272–359 (TYHIFMAGNQ…AHSFEKIQKI (88 aa)) are cytoplasmic.

This sequence belongs to the DHHC palmitoyltransferase family. ERF2/ZDHHC9 subfamily. In terms of assembly, interacts with SHR5. Autopalmitoylated.

Its subcellular location is the endoplasmic reticulum membrane. The enzyme catalyses L-cysteinyl-[protein] + hexadecanoyl-CoA = S-hexadecanoyl-L-cysteinyl-[protein] + CoA. In terms of biological role, the ERF2-SHR5 complex is a palmitoyltransferase specific for Ras proteins. Palmitoylates RAS2, which is required for its proper plasma membrane localization. This Saccharomyces cerevisiae (strain ATCC 204508 / S288c) (Baker's yeast) protein is Palmitoyltransferase ERF2 (ERF2).